The chain runs to 150 residues: Arginine repressor (150 aa).

The protein belongs to the ArgR family.

The protein resides in the cytoplasm. Its pathway is amino-acid biosynthesis; L-arginine biosynthesis [regulation]. In terms of biological role, regulates arginine biosynthesis genes. The protein is Arginine repressor of Clostridium botulinum (strain Alaska E43 / Type E3).